We begin with the raw amino-acid sequence, 432 residues long: Adenylosuccinate synthetase (432 aa).

GTP is bound by residues 12-18 and 40-42; these read GDEGKGK and GHT. Asp13 acts as the Proton acceptor in catalysis. Mg(2+) contacts are provided by Asp13 and Gly40. IMP-binding positions include 13-16, 38-41, Thr130, Arg144, Gln226, Thr241, and Arg305; these read DEGK and NAGH. The active-site Proton donor is the His41. 301-307 provides a ligand contact to substrate; it reads STTGRSR. GTP contacts are provided by residues Arg307, 333 to 335, and 415 to 417; these read KLD and SVG.

This sequence belongs to the adenylosuccinate synthetase family. As to quaternary structure, homodimer. Mg(2+) is required as a cofactor.

The protein resides in the cytoplasm. The catalysed reaction is IMP + L-aspartate + GTP = N(6)-(1,2-dicarboxyethyl)-AMP + GDP + phosphate + 2 H(+). Its pathway is purine metabolism; AMP biosynthesis via de novo pathway; AMP from IMP: step 1/2. Its function is as follows. Plays an important role in the de novo pathway of purine nucleotide biosynthesis. Catalyzes the first committed step in the biosynthesis of AMP from IMP. The sequence is that of Adenylosuccinate synthetase from Bdellovibrio bacteriovorus (strain ATCC 15356 / DSM 50701 / NCIMB 9529 / HD100).